We begin with the raw amino-acid sequence, 174 residues long: RNA pyrophosphohydrolase (174 aa).

The region spanning 6–149 (GFRANVGIII…KRDVYRKVMK (144 aa)) is the Nudix hydrolase domain. Residues 38 to 59 (GGVDDGESAEEAMYRELYEEVG) carry the Nudix box motif.

Belongs to the Nudix hydrolase family. RppH subfamily. Requires a divalent metal cation as cofactor.

Its function is as follows. Accelerates the degradation of transcripts by removing pyrophosphate from the 5'-end of triphosphorylated RNA, leading to a more labile monophosphorylated state that can stimulate subsequent ribonuclease cleavage. This is RNA pyrophosphohydrolase from Shewanella sp. (strain ANA-3).